We begin with the raw amino-acid sequence, 282 residues long: ABC transporter I family member 21 (282 aa).

Residues 13-248 (IRVSGMQFSY…KTSPNLLSVV (236 aa)) form the ABC transporter domain. 46-53 (GANGSGKT) contacts ATP.

The protein belongs to the ABC transporter superfamily. ABCI family. In terms of tissue distribution, expressed in root elongating zone and root meristem, as well as in elongating etiolated hypocotyls.

It is found in the cytoplasm. The sequence is that of ABC transporter I family member 21 (ABCI21) from Arabidopsis thaliana (Mouse-ear cress).